The sequence spans 66 residues: Alpha-bisabolene synthase (66 aa).

It belongs to the terpene synthase family. Tpsd subfamily. Mn(2+) serves as cofactor. K(+) is required as a cofactor.

Its subcellular location is the cytoplasm. It carries out the reaction (2E,6E)-farnesyl diphosphate = (E,R)-alpha-bisabolene + diphosphate. It functions in the pathway terpene metabolism; oleoresin biosynthesis. In terms of biological role, involved in defensive oleoresin formation in conifers in response to insect attack or other injury. Involved in sesquiterpene (C15) olefins biosynthesis. This is Alpha-bisabolene synthase from Pseudotsuga menziesii (Douglas-fir).